We begin with the raw amino-acid sequence, 794 residues long: Furin (794 aa).

An N-terminal signal peptide occupies residues 1-26 (MELRPWLLWVVAATGTLVLLAADAQG). Residues 27 to 107 (QKVFTNTWAV…QQVAKRRTKR (81 aa)) constitute a propeptide, inhibition peptide. Residues 108–715 (DVYQEPTDPK…AGLLPSHLPE (608 aa)) lie on the Lumenal side of the membrane. Aspartate 115 contributes to the Ca(2+) binding site. Positions 121–435 (QWYLSGVTQR…YGLLDAGAMV (315 aa)) constitute a Peptidase S8 domain. Aspartate 153 acts as the Charge relay system in catalysis. Aspartate 154 serves as a coordination point for substrate. Residues aspartate 162, aspartate 174, aspartate 179, and aspartate 181 each contribute to the Ca(2+) site. The disordered stretch occupies residues 162–183 (DLAGNYDPGASFDVNDQDPDPQ). Substrate is bound at residue 191–192 (DN). The Charge relay system role is filled by histidine 194. Residues valine 205, asparagine 208, valine 210, and glycine 212 each coordinate Ca(2+). Disulfide bonds link cysteine 211-cysteine 360 and cysteine 303-cysteine 333. Substrate contacts are provided by residues glutamate 236, 253 to 258 (SWGPED), aspartate 264, and 292 to 295 (ASGN). Aspartate 258 is a Ca(2+) binding site. Aspartate 301 provides a ligand contact to Ca(2+). Residues aspartate 306 and tyrosine 308 each coordinate substrate. A Ca(2+)-binding site is contributed by glutamate 331. Serine 368 functions as the Charge relay system in the catalytic mechanism. Residue serine 368 participates in substrate binding. 2 N-linked (GlcNAc...) asparagine glycosylation sites follow: asparagine 387 and asparagine 440. A P/Homo B domain is found at 444–576 (VAPQRKCIID…TLVLYGTAPE (133 aa)). Residues cysteine 450 and cysteine 474 are joined by a disulfide bond. A Cell attachment site motif is present at residues 498–500 (RGD). Asparagine 553 carries an N-linked (GlcNAc...) asparagine glycan. FU repeat units lie at residues 577–620 (GLPV…GFAP) and 638–681 (ASVC…QSQS). The tract at residues 673 to 696 (QTCSRQSQSSRESPPQQQPPRLPP) is disordered. The span at 676–687 (SRQSQSSRESPP) shows a compositional bias: low complexity. A helical transmembrane segment spans residues 716–738 (VVAGLSCAFIVLVFVTVFLVLQL). Residues 739–794 (RSGFSFRGVKVYTMDRGLISYKGLPPEAWQEECPSDSEEDEGRGERTAFIKDQSAL) lie on the Cytoplasmic side of the membrane. The segment at 759-762 (YKGL) is cell surface signal. Residues 767–780 (WQEECPSDSEEDEG) are compositionally biased toward acidic residues. The tract at residues 767-794 (WQEECPSDSEEDEGRGERTAFIKDQSAL) is disordered. Serine 773 and serine 775 each carry phosphoserine; by CK2. Positions 773–779 (SDSEEDE) match the Trans Golgi network signal motif.

This sequence belongs to the peptidase S8 family. Furin subfamily. Interacts with FLNA. Binds to PACS1 which mediates TGN localization and connection to clathrin adapters. Interacts with LAMP1, LAMP2 and LAMP3. It depends on Ca(2+) as a cofactor. The inhibition peptide, which plays the role of an intramolecular chaperone, is autocatalytically removed in the endoplasmic reticulum (ER) and remains non-covalently bound to furin as a potent autoinhibitor. Following transport to the trans Golgi, a second cleavage within the inhibition propeptide results in propeptide dissociation and furin activation. Post-translationally, phosphorylation is required for TGN localization of the endoprotease. In vivo, exists as di-, mono- and non-phosphorylated forms. Seems to be expressed ubiquitously.

The protein localises to the golgi apparatus. The protein resides in the trans-Golgi network membrane. It localises to the cell membrane. Its subcellular location is the secreted. It is found in the endosome membrane. The enzyme catalyses Release of mature proteins from their proproteins by cleavage of -Arg-Xaa-Yaa-Arg-|-Zaa- bonds, where Xaa can be any amino acid and Yaa is Arg or Lys. Releases albumin, complement component C3 and von Willebrand factor from their respective precursors.. Its activity is regulated as follows. Inhibited by the not secondly cleaved propeptide. Inhibited by m-guanidinomethyl-phenylacetyl-Arg-Val-Arg-(amidomethyl)-benzamidine (m-guanidinomethyl-Phac-RVR-Amb) and 4-guanidinomethyl-phenylacetyl-Arg-Tle-Arg-4-amidinobenzylamide (MI-1148). Inhibited by Decanoyl-Arg-Val-Lys-Arg-chloromethylketone (decanoyl-RVKR-CMK). Inhibited by heparin/heparan sulfate-binding. Functionally, ubiquitous endoprotease within constitutive secretory pathways capable of cleavage at the RX(K/R)R consensus motif. Mediates processing of TGFB1, an essential step in TGF-beta-1 activation. Converts through proteolytic cleavage the non-functional Brain natriuretic factor prohormone into its active hormone BNP(1-32). By mediating processing of accessory subunit ATP6AP1/Ac45 of the V-ATPase, regulates the acidification of dense-core secretory granules in islets of Langerhans cells. (Microbial infection) Cleaves and activates diphtheria toxin DT. In terms of biological role, (Microbial infection) Cleaves and activates anthrax toxin protective antigen (PA). Its function is as follows. (Microbial infection) Cleaves and activates HIV-1 virus Envelope glycoprotein gp160. Functionally, (Microbial infection) Required for H7N1 and H5N1 influenza virus infection probably by cleaving hemagglutinin. (Microbial infection) Able to cleave S.pneumoniae serine-rich repeat protein PsrP. In terms of biological role, (Microbial infection) Facilitates human coronaviruses EMC and SARS-CoV-2 infections by proteolytically cleaving the spike protein at the monobasic S1/S2 cleavage site. This cleavage is essential for spike protein-mediated cell-cell fusion and entry into human lung cells. Its function is as follows. (Microbial infection) Facilitates mumps virus infection by proteolytically cleaving the viral fusion protein F. The chain is Furin from Homo sapiens (Human).